The primary structure comprises 429 residues: Glutamate-1-semialdehyde 2,1-aminomutase 2 (429 aa).

K268 is subject to N6-(pyridoxal phosphate)lysine.

It belongs to the class-III pyridoxal-phosphate-dependent aminotransferase family. HemL subfamily. In terms of assembly, homodimer. Pyridoxal 5'-phosphate is required as a cofactor.

It localises to the cytoplasm. It carries out the reaction (S)-4-amino-5-oxopentanoate = 5-aminolevulinate. The protein operates within porphyrin-containing compound metabolism; protoporphyrin-IX biosynthesis; 5-aminolevulinate from L-glutamyl-tRNA(Glu): step 2/2. The polypeptide is Glutamate-1-semialdehyde 2,1-aminomutase 2 (Bacillus cereus (strain AH820)).